The primary structure comprises 888 residues: Patched domain-containing protein 1 (888 aa).

The helical transmembrane segment at 20-40 (FIASHPVFFASAPVLISILLG) threads the bilayer. Residues N77, N133, and N167 are each glycosylated (N-linked (GlcNAc...) asparagine). Positions 268-427 (SERYLVTSLI…LSFYGSSLVF (160 aa)) constitute an SSD domain. The next 2 helical transmembrane spans lie at 273–293 (VTSL…QDCV) and 298–318 (WLGL…AGII). 2 N-linked (GlcNAc...) asparagine glycosylation sites follow: N319 and N326. 4 helical membrane-spanning segments follow: residues 328–348 (TFLG…FEML), 373–393 (LSFS…ASPF), 407–427 (CIAI…SLVF), and 502–522 (PFVV…YLQV). N-linked (GlcNAc...) asparagine glycans are attached at residues N568, N599, and N608. A run of 2 helical transmembrane segments spans residues 707–727 (ALFL…NVWI) and 738–758 (VIGF…LCLI). The N-linked (GlcNAc...) asparagine glycan is linked to N762. The chain crosses the membrane as a helical span at residues 795–815 (GVAILQSYLCYIVGLIPLAAV). N818 is a glycosylation site (N-linked (GlcNAc...) asparagine). The helical transmembrane segment at 826–846 (CLFLIAFVTFFHCFAILPVIL) threads the bilayer.

The protein belongs to the patched family. As to expression, widely expressed, including in various regions of the brain with highest expression in the gray and white cerebellum, followed by the cerebellar vermis and the pituitary gland.

The protein resides in the cell membrane. The protein localises to the cell projection. It localises to the dendritic spine. In terms of biological role, required for the development and function of the thalamic reticular nucleus (TRN), a part of the thalamus that is critical for thalamocortical transmission, generation of sleep rhythms, sensorimotor processing and attention. Can bind cholesterol in vitro. The sequence is that of Patched domain-containing protein 1 from Homo sapiens (Human).